The chain runs to 548 residues: Probable malate:quinone oxidoreductase (548 aa).

The disordered stretch occupies residues 521–548; the sequence is DKPQAADSTPKPQLKPQPVQKEVADIAL. Over residues 530 to 541 the composition is skewed to low complexity; it reads PKPQLKPQPVQK.

Belongs to the MQO family. The cofactor is FAD.

The catalysed reaction is (S)-malate + a quinone = a quinol + oxaloacetate. It functions in the pathway carbohydrate metabolism; tricarboxylic acid cycle; oxaloacetate from (S)-malate (quinone route): step 1/1. The protein is Probable malate:quinone oxidoreductase of Escherichia coli (strain UTI89 / UPEC).